A 100-amino-acid chain; its full sequence is Large ribosomal subunit protein bL28 (100 aa).

Belongs to the bacterial ribosomal protein bL28 family.

The polypeptide is Large ribosomal subunit protein bL28 (Ehrlichia ruminantium (strain Welgevonden)).